The sequence spans 628 residues: MKPAQDTRFDYVKIGLASPERVRQWGERTLPNGVVVGEVTKPETINYRTLKPEMDGLFCERIFGPSKDWECWCGKYKRVRHRGIVCERCGVEVTESRVRRHRMGYIKLAAPVTHVWYLKGIPSYMSILLDMALRDVEQIVYFNAYVVLDPGNASNLSYKQLLTEDQWIEIEDQIYAEDSDLYGIEVGIGAEAIQRLLQEMNLEEIAEILREEIAQSKGQKRAKLIKRLRVIDNFIATGSLPAWMVLDVIPVIPPDLRPMVQLDGGRFATSDLNDLYRRVINRNNRLARLQEILAPEIIVRNEKRMLQEAVDALIDNGRRGRTVVGANNRPLKSLSDIIEGKQGRFRQNLLGKRVDYSGRSVIVVGPKLKIYQCGLPREMAIELFQPFVIHRLIRLGLVNNIKAAKKLIIKGDPSVWNVLEEVITGHPVLLNRAPTLHRLGIQAFEPILVEGRAIQLHPLVCPAFNADFDGDQMAVHVPLSLESQAEARLLMLACHNILSPATGKPIVAPSQDMVLGCYYLTAENPQSQKGNGRYFGNIDDAVKAFEHGLVDLHAYVWLRSEDPNEEVVTDLPDTEVLKTETLEDGSVIKHYRERRVREIDGEAVSQFIRTTPGRIIYNKTIQDALTVA.

Positions 71, 73, 86, and 89 each coordinate Zn(2+). Mg(2+) is bound by residues aspartate 467, aspartate 469, and aspartate 471.

The protein belongs to the RNA polymerase beta' chain family. RpoC1 subfamily. As to quaternary structure, in cyanobacteria the RNAP catalytic core is composed of 2 alpha, 1 beta, 1 beta', 1 gamma and 1 omega subunit. When a sigma factor is associated with the core the holoenzyme is formed, which can initiate transcription. Mg(2+) serves as cofactor. Zn(2+) is required as a cofactor.

The catalysed reaction is RNA(n) + a ribonucleoside 5'-triphosphate = RNA(n+1) + diphosphate. Functionally, DNA-dependent RNA polymerase catalyzes the transcription of DNA into RNA using the four ribonucleoside triphosphates as substrates. This chain is DNA-directed RNA polymerase subunit gamma, found in Crocosphaera subtropica (strain ATCC 51142 / BH68) (Cyanothece sp. (strain ATCC 51142)).